We begin with the raw amino-acid sequence, 415 residues long: Histidine--tRNA ligase (415 aa).

It belongs to the class-II aminoacyl-tRNA synthetase family. Homodimer.

The protein resides in the cytoplasm. The enzyme catalyses tRNA(His) + L-histidine + ATP = L-histidyl-tRNA(His) + AMP + diphosphate + H(+). This Clostridium botulinum (strain Kyoto / Type A2) protein is Histidine--tRNA ligase.